Here is a 475-residue protein sequence, read N- to C-terminus: MNGPSPRSSHLSQPVVKSVLVYRNGDPFFAGRRVVIHEKKVSSFDIFLKEVTGGVQAPFGAVRNIYTPRTGHRIRKLDQIESGGNYVAGGQEAFKKLNYLDIGEIKKRPMEAVNTEVKPVIHSKINVSARFRKALHEPCTIFLIANGDLISPASRLLIPRKALNQWDHVLQMVTEKITLRSGAVHRLYTLEGKLVESGAELENGQFYVAVGRDKFKRLPYSELLFDKSAMRRPYGQKASSLPPMVGSRKSKGSGNYRQSKSTIGSSDNSSPQPLKRKGKKDSNSEKPTKVKQSVKSKNSHQAIPDNDEGIFKAGAERSETRGAAEVQEDEDTQVEVPVDQRPAEIVDEEEDGEKTSKDANQKDDFSAMNGEAEDRAGSKVADAPEEEEGIPDQGEKKASPSRVNGGTDEENGEELDQVTEELQPTVDEKGKAEGDNSAQDEAGLDAQRPPRPEVTVTSPQENEGNESNKASSAVA.

Doublecortin domains follow at residues 17 to 100 (KSVL…LNYL) and 139 to 221 (CTIF…LPYS). The tract at residues 234 to 475 (YGQKASSLPP…ESNKASSAVA (242 aa)) is disordered. Polar residues predominate over residues 252-272 (GSGNYRQSKSTIGSSDNSSPQ). Phosphoserine is present on S270. Over residues 353–365 (EKTSKDANQKDDF) the composition is skewed to basic and acidic residues. Positions 407–419 (TDEENGEELDQVT) are enriched in acidic residues. The segment covering 455-475 (TVTSPQENEGNESNKASSAVA) has biased composition (polar residues).

In terms of assembly, interacts with DVL1, DVL2 and DVL3. Expressed in hair cells of the inner ear.

Its subcellular location is the cell projection. The protein localises to the cilium. It is found in the cytoplasm. The protein resides in the cytoskeleton. It localises to the cilium axoneme. Its subcellular location is the kinocilium. Protein that plays a role in the inhibition of canonical Wnt signaling pathway. May be involved in neuronal migration during development of the cerebral neocortex. Involved in the control of ciliogenesis and ciliary length. The protein is Doublecortin domain-containing protein 2 (Dcdc2) of Rattus norvegicus (Rat).